A 135-amino-acid chain; its full sequence is Large ribosomal subunit protein eL27y (135 aa).

The protein belongs to the eukaryotic ribosomal protein eL27 family.

This chain is Large ribosomal subunit protein eL27y (RPL27B), found in Arabidopsis thaliana (Mouse-ear cress).